The primary structure comprises 271 residues: Structure-specific endonuclease subunit SLX1 (271 aa).

Residues 9-94 (RFFGVYLLYC…PQASRRLTHV (86 aa)) form the GIY-YIG domain. The segment at 182 to 234 (CTLCARMLQDEEGPLCCPHPGCPLRAHIICLAEEFLQEEPGQLLPLEGHCPSC) adopts an SLX1-type zinc-finger fold.

The protein belongs to the SLX1 family. As to quaternary structure, forms a heterodimer with SLX4. A divalent metal cation serves as cofactor.

Its subcellular location is the nucleus. In terms of biological role, catalytic subunit of the SLX1-SLX4 structure-specific endonuclease that resolves DNA secondary structures generated during DNA repair and recombination. Has endonuclease activity towards branched DNA substrates, introducing single-strand cuts in duplex DNA close to junctions with ss-DNA. Has a preference for 5'-flap structures, and promotes symmetrical cleavage of static and migrating Holliday junctions (HJs). Resolves HJs by generating two pairs of ligatable, nicked duplex products. The polypeptide is Structure-specific endonuclease subunit SLX1 (Slx1b) (Rattus norvegicus (Rat)).